A 570-amino-acid chain; its full sequence is Interleukin-1 receptor accessory protein (570 aa).

The first 20 residues, 1–20 (MGLPWCLMSLFFCGILQSHA), serve as a signal peptide directing secretion. Ig-like C2-type domains follow at residues 21–128 (SERC…VAFP), 141–230 (PMRL…RTMT), and 243–348 (PHIY…AKVK). Residues 21-367 (SERCDDWGLD…VELACGFGAT (347 aa)) are Extracellular-facing. 5 disulfide bridges follow: C24–C122, C47–C114, C137–C181, C160–C212, and C266–C332. Residue N57 is glycosylated (N-linked (GlcNAc...) asparagine). Residues 69-85 (IWYWTRQDRDLEEPINF) form an essential for interaction with PTPRD region. N107, N111, N118, N157, N196, and N209 each carry an N-linked (GlcNAc...) asparagine glycan. Residues 368-388 (VFLVVVLIVVYHVYWLEMVLF) form a helical membrane-spanning segment. The Cytoplasmic portion of the chain corresponds to 389–570 (YRAHFGTDET…GLSYSSLKNV (182 aa)). Residues 403–546 (KEYDIYVSYA…RFWKQLQVAM (144 aa)) enclose the TIR domain. E482 is a catalytic residue. A disordered region spans residues 550 to 570 (KSPRWSSSDKQGLSYSSLKNV). Residues 553–570 (RWSSSDKQGLSYSSLKNV) show a composition bias toward polar residues. The residue at position 557 (S557) is a Phosphoserine.

This sequence belongs to the interleukin-1 receptor family. In terms of assembly, the interleukin-36 receptor complex is a heterodimer of IL1RL2 and IL1RAP; the association is inhibited by IL36RN. The interleukin-1 receptor complex is a heterodimer of IL1R1 and IL1RAP. Associates with IL1R2 to form a non-signaling interleukin-1 receptor complex. Interacts with IL-33-bound IL1RL1 to form the minimal interleukin-33 signaling complex with a 1:1:1 stoichiometry. Interacts with KIT (independently of stimulation with KITLG/SCF). A mast cell-specific KITLG/SCF-induced interleukin-33 signaling complex contains IL1RL1, IL1RAP, KIT and MYD88. Interacts (via the first immunoglobilin domain) with PTPRD (via the third immunoglobilin domain); induces pre- and postsynaptic differentiation of neurons. Highly expressed in hypothalamus, in the dentate gyrus of hippocampus, cerebral cortex, cerebellum, liver and lung.

The protein resides in the membrane. The enzyme catalyses NAD(+) + H2O = ADP-D-ribose + nicotinamide + H(+). In terms of biological role, coreceptor for IL1RL2 in the IL-36 signaling system. Coreceptor with IL1R1 in the IL-1 signaling system. Associates with IL1R1 bound to IL1B to form the high affinity interleukin-1 receptor complex which mediates interleukin-1-dependent activation of NF-kappa-B and other pathways. Signaling involves the recruitment of adapter molecules such as TOLLIP, MYD88, and IRAK1 or IRAK2 via the respective TIR domains of the receptor/coreceptor subunits. Recruits TOLLIP to the signaling complex. Does not bind to interleukin-1 alone; binding of IL1RN to IL1R1, prevents its association with IL1R1 to form a signaling complex. The cellular response is modulated through a non-signaling association with the membrane IL1R2 decoy receptor. Coreceptor for IL1RL1 in the IL-33 signaling system. Can bidirectionally induce pre- and postsynaptic differentiation of neurons by trans-synaptically binding to PTPRD. May play a role in IL1B-mediated costimulation of IFNG production from T-helper 1 (Th1) cells. This Rattus norvegicus (Rat) protein is Interleukin-1 receptor accessory protein (Il1rap).